Consider the following 281-residue polypeptide: MVLEFTKYQGLGNDFILLDNRQQTTPLVTPEQAIQLCDRHFGIGADGVIFALPGQAGADYTMRIFNSDGSEPEMCGNGIRCLARFIDHLEGGNAPGKTYSIHTLAGMIRPRLETDALVRVDMGEPILTATDIPTTLKDSNGQAVNQPLEVAGKTWMVTCVSMGNPHCITFVEDVAAIALEVIGKDFEHHPAFPQRINTEFIEVVRPDYIKMRVWERGAGITLACGTGACASVVAGVLTGHCDRLCTVELPGGCLQIEWSAADNHIYMTGPAAISFQGQVTL.

Residues Asn-13 and Asn-66 each contribute to the substrate site. Cys-75 acts as the Proton donor in catalysis. Substrate-binding positions include 76–77 (GN), Asn-164, Asn-197, and 215–216 (ER). Cys-224 serves as the catalytic Proton acceptor. Substrate is bound at residue 225-226 (GT).

It belongs to the diaminopimelate epimerase family. As to quaternary structure, homodimer.

Its subcellular location is the cytoplasm. It carries out the reaction (2S,6S)-2,6-diaminopimelate = meso-2,6-diaminopimelate. Its pathway is amino-acid biosynthesis; L-lysine biosynthesis via DAP pathway; DL-2,6-diaminopimelate from LL-2,6-diaminopimelate: step 1/1. In terms of biological role, catalyzes the stereoinversion of LL-2,6-diaminopimelate (L,L-DAP) to meso-diaminopimelate (meso-DAP), a precursor of L-lysine and an essential component of the bacterial peptidoglycan. The sequence is that of Diaminopimelate epimerase from Picosynechococcus sp. (strain ATCC 27264 / PCC 7002 / PR-6) (Agmenellum quadruplicatum).